Reading from the N-terminus, the 502-residue chain is Probable cytosol aminopeptidase (502 aa).

Residues Lys267 and Asp272 each coordinate Mn(2+). The active site involves Lys279. Mn(2+)-binding residues include Asp290, Asp349, and Glu351. Arg353 is an active-site residue.

Belongs to the peptidase M17 family. Mn(2+) serves as cofactor.

It localises to the cytoplasm. It catalyses the reaction Release of an N-terminal amino acid, Xaa-|-Yaa-, in which Xaa is preferably Leu, but may be other amino acids including Pro although not Arg or Lys, and Yaa may be Pro. Amino acid amides and methyl esters are also readily hydrolyzed, but rates on arylamides are exceedingly low.. The enzyme catalyses Release of an N-terminal amino acid, preferentially leucine, but not glutamic or aspartic acids.. Presumably involved in the processing and regular turnover of intracellular proteins. Catalyzes the removal of unsubstituted N-terminal amino acids from various peptides. The chain is Probable cytosol aminopeptidase from Aeromonas hydrophila subsp. hydrophila (strain ATCC 7966 / DSM 30187 / BCRC 13018 / CCUG 14551 / JCM 1027 / KCTC 2358 / NCIMB 9240 / NCTC 8049).